A 603-amino-acid chain; its full sequence is MPVRQLPETVVNRIAAGEVVERPASVVKELVENAIDAGAGRIDIFTDGGGRRRIGITDDGGGMTKADLALAVDRHATSKLDDEDLLRIRTLGFRGEALPSIGAVAKLGITTRHGSEPHAWSLTVEGGRKSAIVPAALTQGTRVEVSDLFYATPARLKFLKTDRTEAEAIREVVRRLAMARPDIAFTLAGEERAPVTWTAALPGAAGQLTRLGDILGADFRCSAIAVRAERDGVTVEGFAAAPSLTRANALGQYLFVNGRPVRDKLIIGAVRAAYSDYLPRDRHPVVALFVTTAPQEVDANVHPAKTEVRFRNAGLVRALIVHALKEGLAREGRRTAANSDGAVLTAFRPAAVPRPANWDWRQSPASPVGAGPWSGGATAAAFAAPGQTAFDVGAPSADVRSDPNPVADLIDRPLGAARTQIHETYIVTQTRDGLIVVDQHAAHERIVYEKLKAALERDGVQRQILLIPDIVELDEATVEKLIDRAPELEKFGLAIESFGPGAVAVRETPSLLGKTNAAALLRDLAEHMAEWDEALPLERRLMHVAATMACHGSVRAGRILKPEEMNALLREMEDTPNSGQCNHGRPTYVELKLADIEKLFGRR.

It belongs to the DNA mismatch repair MutL/HexB family.

Its function is as follows. This protein is involved in the repair of mismatches in DNA. It is required for dam-dependent methyl-directed DNA mismatch repair. May act as a 'molecular matchmaker', a protein that promotes the formation of a stable complex between two or more DNA-binding proteins in an ATP-dependent manner without itself being part of a final effector complex. This Nitrobacter hamburgensis (strain DSM 10229 / NCIMB 13809 / X14) protein is DNA mismatch repair protein MutL.